Consider the following 95-residue polypeptide: Small ribosomal subunit protein bS6 (95 aa).

This sequence belongs to the bacterial ribosomal protein bS6 family.

In terms of biological role, binds together with bS18 to 16S ribosomal RNA. This chain is Small ribosomal subunit protein bS6, found in Thermoanaerobacter pseudethanolicus (strain ATCC 33223 / 39E) (Clostridium thermohydrosulfuricum).